We begin with the raw amino-acid sequence, 711 residues long: Quinolinate synthase, chloroplastic (711 aa).

The transit peptide at 1–41 directs the protein to the chloroplast; that stretch reads MDVSSLAAAAPSLVAPPLHHKPHLAFPPHHPSPARGSIGVR. Positions 17–63 are disordered; that stretch reads PLHHKPHLAFPPHHPSPARGSIGVRCAHSPSPHPLRPSAATADEEVS. The active-site Cysteine persulfide intermediate is the C114. The iminosuccinate site is built by H263 and S289. Residue C343 participates in [4Fe-4S] cluster binding. Residues 372–374 and S394 contribute to the iminosuccinate site; that span reads YIN. C467 lines the [4Fe-4S] cluster pocket. Iminosuccinate-binding positions include 493–495 and T518; that span reads HFE. C631 is a binding site for [4Fe-4S] cluster.

It belongs to the quinolinate synthase family. Type 1 subfamily. Homodimer. It depends on [4Fe-4S] cluster as a cofactor.

Its subcellular location is the plastid. The protein resides in the chloroplast. The enzyme catalyses iminosuccinate + dihydroxyacetone phosphate = quinolinate + phosphate + 2 H2O + H(+). It functions in the pathway cofactor biosynthesis; NAD(+) biosynthesis; quinolinate from iminoaspartate: step 1/1. Catalyzes the condensation of iminoaspartate with dihydroxyacetone phosphate to form quinolinate. The chain is Quinolinate synthase, chloroplastic from Oryza sativa subsp. japonica (Rice).